The following is a 448-amino-acid chain: tRNA(Ile)-lysidine synthase (448 aa).

30-35 (GGGADS) is a binding site for ATP.

Belongs to the tRNA(Ile)-lysidine synthase family.

It localises to the cytoplasm. It carries out the reaction cytidine(34) in tRNA(Ile2) + L-lysine + ATP = lysidine(34) in tRNA(Ile2) + AMP + diphosphate + H(+). Ligates lysine onto the cytidine present at position 34 of the AUA codon-specific tRNA(Ile) that contains the anticodon CAU, in an ATP-dependent manner. Cytidine is converted to lysidine, thus changing the amino acid specificity of the tRNA from methionine to isoleucine. The protein is tRNA(Ile)-lysidine synthase of Idiomarina loihiensis (strain ATCC BAA-735 / DSM 15497 / L2-TR).